A 263-amino-acid chain; its full sequence is Ribonuclease HII (263 aa).

The region spanning 39-257 (AFFTGIDEAG…VKPAAAPHAA (219 aa)) is the RNase H type-2 domain. Positions 45, 46, and 157 each coordinate a divalent metal cation.

The protein belongs to the RNase HII family. Mn(2+) serves as cofactor. Requires Mg(2+) as cofactor.

Its subcellular location is the cytoplasm. The enzyme catalyses Endonucleolytic cleavage to 5'-phosphomonoester.. Functionally, endonuclease that specifically degrades the RNA of RNA-DNA hybrids. In Oleidesulfovibrio alaskensis (strain ATCC BAA-1058 / DSM 17464 / G20) (Desulfovibrio alaskensis), this protein is Ribonuclease HII.